The chain runs to 493 residues: Putative MgpC-like protein MPN_414 (493 aa).

Residues methionine 1 to proline 14 are compositionally biased toward polar residues. 2 disordered regions span residues methionine 1–serine 92 and lysine 441–histidine 493. Basic and acidic residues-rich tracts occupy residues aspartate 25 to asparagine 34 and aspartate 44 to glycine 56. Polar residues-rich tracts occupy residues valine 72–serine 92 and glutamate 445–arginine 472. Basic and acidic residues predominate over residues arginine 482–histidine 493.

Belongs to the MgpC family.

The chain is Putative MgpC-like protein MPN_414 from Mycoplasma pneumoniae (strain ATCC 29342 / M129 / Subtype 1) (Mycoplasmoides pneumoniae).